The following is a 166-amino-acid chain: Vasopressin-neurophysin 2-copeptin (166 aa).

The N-terminal stretch at 1 to 19 (MPDATLPACFLSLLAFTSA) is a signal peptide. C20 and C25 are disulfide-bonded. A Glycine amide modification is found at G28. Intrachain disulfides connect C41-C85, C44-C58, C52-C75, C59-C65, C92-C104, C98-C116, and C105-C110. An N-linked (GlcNAc...) asparagine glycan is attached at N133.

This sequence belongs to the vasopressin/oxytocin family. As to quaternary structure, interacts with vasopressin receptors V1bR/AVPR1B (Ki=85 pM), V1aR/AVPR1A (Ki=0.6 nM) and V2R/AVPR2 (Ki=4.9 nM). Interacts with oxytocin receptor (OXTR) (Ki=110 nM).

It is found in the secreted. Neurophysin 2 specifically binds vasopressin. Its function is as follows. Vasopressin has a direct antidiuretic action on the kidney, it also causes vasoconstriction of the peripheral vessels. Acts by binding to vasopressin receptors (V1bR/AVPR1B, V1aR/AVPR1A, and V2R/AVPR2). The polypeptide is Vasopressin-neurophysin 2-copeptin (AVP) (Bos taurus (Bovine)).